Here is a 294-residue protein sequence, read N- to C-terminus: Probable enoyl-CoA hydratase 2 (294 aa).

(3R)-3-hydroxydecanoyl-CoA-binding positions include 84–85, Lys-113, 190–195, Gly-213, and Phe-243; these read HG and DLNPLH. The MaoC-like domain maps to 165 to 269; it reads DRAPDAISKQ…INPTTILFQS (105 aa). The Microbody targeting signal signature appears at 292-294; sequence GSL.

Belongs to the short-chain dehydrogenases/reductases (SDR) family.

Its subcellular location is the peroxisome. The enzyme catalyses a (3R)-3-hydroxyacyl-CoA = a (2E)-enoyl-CoA + H2O. The chain is Probable enoyl-CoA hydratase 2 (mfeB) from Dictyostelium discoideum (Social amoeba).